A 53-amino-acid polypeptide reads, in one-letter code: Membrane antigen containing repeating peptides (53 aa).

6 repeat units span residues 1–10 (EAEEAARLQA), 11–20 (EAEEAARQQA), 21–30 (EAEEAARLQA), 31–40 (EAEEAARLQA), 41–50 (EAEEAARLQA), and 51–53 (EAE). Residues 1 to 53 (EAEEAARLQAEAEEAARQQAEAEEAARLQAEAEEAARLQAEAEEAARLQAEAE) are 6 X 10 AA tandem repeats. The interval 1–53 (EAEEAARLQAEAEEAARQQAEAEEAARLQAEAEEAARLQAEAEEAARLQAEAE) is disordered.

Its subcellular location is the membrane. The protein is Membrane antigen containing repeating peptides of Leishmania major.